The following is a 458-amino-acid chain: Phosphomethylpyrimidine synthase (458 aa).

Residues N80, M109, Y139, H175, 195–197 (SRG), 236–239 (DSLR), and E275 each bind substrate. H279 lines the Zn(2+) pocket. Residue Y302 participates in substrate binding. A Zn(2+)-binding site is contributed by H343. [4Fe-4S] cluster is bound by residues C423, C426, and C431.

It belongs to the ThiC family. It depends on [4Fe-4S] cluster as a cofactor.

It carries out the reaction 5-amino-1-(5-phospho-beta-D-ribosyl)imidazole + S-adenosyl-L-methionine = 4-amino-2-methyl-5-(phosphooxymethyl)pyrimidine + CO + 5'-deoxyadenosine + formate + L-methionine + 3 H(+). It participates in cofactor biosynthesis; thiamine diphosphate biosynthesis. Functionally, catalyzes the synthesis of the hydroxymethylpyrimidine phosphate (HMP-P) moiety of thiamine from aminoimidazole ribotide (AIR) in a radical S-adenosyl-L-methionine (SAM)-dependent reaction. The protein is Phosphomethylpyrimidine synthase of Cyanothece sp. (strain PCC 7425 / ATCC 29141).